The sequence spans 331 residues: Aspartate carbamoyltransferase catalytic subunit (331 aa).

Carbamoyl phosphate is bound by residues R66 and T67. Residue K94 participates in L-aspartate binding. Carbamoyl phosphate-binding residues include R116, H149, and Q152. Residues R189 and R243 each contribute to the L-aspartate site. Carbamoyl phosphate-binding residues include G284 and P285.

Belongs to the aspartate/ornithine carbamoyltransferase superfamily. ATCase family. In terms of assembly, heterododecamer (2C3:3R2) of six catalytic PyrB chains organized as two trimers (C3), and six regulatory PyrI chains organized as three dimers (R2).

It catalyses the reaction carbamoyl phosphate + L-aspartate = N-carbamoyl-L-aspartate + phosphate + H(+). The protein operates within pyrimidine metabolism; UMP biosynthesis via de novo pathway; (S)-dihydroorotate from bicarbonate: step 2/3. Its function is as follows. Catalyzes the condensation of carbamoyl phosphate and aspartate to form carbamoyl aspartate and inorganic phosphate, the committed step in the de novo pyrimidine nucleotide biosynthesis pathway. In Thermosynechococcus vestitus (strain NIES-2133 / IAM M-273 / BP-1), this protein is Aspartate carbamoyltransferase catalytic subunit.